Consider the following 457-residue polypeptide: Glutamyl-tRNA reductase (457 aa).

Substrate contacts are provided by residues 49 to 52 (TCNR), Ser109, 114 to 116 (ETQ), and Gln120. Residue Cys50 is the Nucleophile of the active site. Residue 189-194 (GAGKMG) coordinates NADP(+).

This sequence belongs to the glutamyl-tRNA reductase family. As to quaternary structure, homodimer.

The catalysed reaction is (S)-4-amino-5-oxopentanoate + tRNA(Glu) + NADP(+) = L-glutamyl-tRNA(Glu) + NADPH + H(+). It participates in porphyrin-containing compound metabolism; protoporphyrin-IX biosynthesis; 5-aminolevulinate from L-glutamyl-tRNA(Glu): step 1/2. Its function is as follows. Catalyzes the NADPH-dependent reduction of glutamyl-tRNA(Glu) to glutamate 1-semialdehyde (GSA). The sequence is that of Glutamyl-tRNA reductase from Oceanobacillus iheyensis (strain DSM 14371 / CIP 107618 / JCM 11309 / KCTC 3954 / HTE831).